The primary structure comprises 514 residues: F-box-like/WD repeat-containing protein TBL1XR1 (514 aa).

An N-acetylserine modification is found at Ser2. Residues 4–36 (SSDEVNFLVYRYLQESGFSHSAFTFGIESHISQ) form the LisH domain. In terms of domain architecture, F-box-like spans 41–86 (GALVPPAALISIIQKGLQYVEAEVSINEDGTLFDGRPIESLSLIDA). Lys102 carries the N6-acetyllysine modification. The segment at 114–139 (AAAATNQQGSAKNGENTANGEENGAH) is disordered. Residues 124–135 (AKNGENTANGEE) show a composition bias toward low complexity. 8 WD repeats span residues 167 to 206 (GHESEVFICAWNPVSDLLASGSGDSTARIWNLSENSTSGP), 223 to 262 (PSNKDVTSLDWNSEGTLLATGSYDGFARIWTKDGNLASTL), 264 to 303 (QHKGPIFALKWNKKGNFILSAGVDKTTIIWDAHTGEAKQQ), 306 to 344 (FHSAPALDVDWQSNNTFASCSTDMCIHVCKLGQDRPIKT), 347 to 386 (GHTNEVNAIKWDPTGNLLASCSDDMTLKIWSMKQDNCVHD), 389 to 437 (AHNK…CIHT), 440 to 479 (KHQEPVYSVAFSPDGRYLASGSFDKCVHIWNTQTGALVHS), and 481 to 513 (RGTGGIFEVCWNAAGDKVGASASDGSVCVLDLR). Residue Lys277 forms a Glycyl lysine isopeptide (Lys-Gly) (interchain with G-Cter in SUMO2) linkage.

The protein belongs to the WD repeat EBI family. In terms of assembly, component of the N-Cor repressor complex, at least composed of NCOR1, NCOR2, HDAC3, TBL1X, TBL1XR1, CORO2A and GPS2. Probable component of some E3 ubiquitin ligase complex. Interacts with histones H2B and H4. Interacts with MECP2; bridges interaction between MECP2 and NCOR1. Interacts with USP44.

Its subcellular location is the nucleus. In terms of biological role, F-box-like protein involved in the recruitment of the ubiquitin/19S proteasome complex to nuclear receptor-regulated transcription units. Plays an essential role in transcription activation mediated by nuclear receptors. Probably acts as integral component of the N-Cor corepressor complex that mediates the recruitment of the 19S proteasome complex, leading to the subsequent proteasomal degradation of N-Cor complex, thereby allowing cofactor exchange, and transcription activation. In Mus musculus (Mouse), this protein is F-box-like/WD repeat-containing protein TBL1XR1 (Tbl1xr1).